A 38-amino-acid chain; its full sequence is Large ribosomal subunit protein bL36 (38 aa).

Belongs to the bacterial ribosomal protein bL36 family.

This Ralstonia nicotianae (strain ATCC BAA-1114 / GMI1000) (Ralstonia solanacearum) protein is Large ribosomal subunit protein bL36.